Reading from the N-terminus, the 354-residue chain is Histidinol-phosphate aminotransferase (354 aa).

At K222 the chain carries N6-(pyridoxal phosphate)lysine.

The protein belongs to the class-II pyridoxal-phosphate-dependent aminotransferase family. Histidinol-phosphate aminotransferase subfamily. As to quaternary structure, homodimer. Pyridoxal 5'-phosphate is required as a cofactor.

It carries out the reaction L-histidinol phosphate + 2-oxoglutarate = 3-(imidazol-4-yl)-2-oxopropyl phosphate + L-glutamate. The protein operates within amino-acid biosynthesis; L-histidine biosynthesis; L-histidine from 5-phospho-alpha-D-ribose 1-diphosphate: step 7/9. This chain is Histidinol-phosphate aminotransferase, found in Leuconostoc citreum (strain KM20).